Here is a 485-residue protein sequence, read N- to C-terminus: Ribulose bisphosphate carboxylase large chain (485 aa).

Substrate-binding residues include N124 and T174. K176 acts as the Proton acceptor in catalysis. K178 is a substrate binding site. Residues K202, D204, and E205 each coordinate Mg(2+). K202 carries the post-translational modification N6-carboxylysine. The active-site Proton acceptor is H294. Substrate is bound by residues R295, H327, and S379.

Belongs to the RuBisCO large chain family. Type I subfamily. As to quaternary structure, heterohexadecamer of 8 large chains and 8 small chains. Mg(2+) serves as cofactor.

It carries out the reaction 2 (2R)-3-phosphoglycerate + 2 H(+) = D-ribulose 1,5-bisphosphate + CO2 + H2O. The enzyme catalyses D-ribulose 1,5-bisphosphate + O2 = 2-phosphoglycolate + (2R)-3-phosphoglycerate + 2 H(+). Functionally, ruBisCO catalyzes two reactions: the carboxylation of D-ribulose 1,5-bisphosphate, the primary event in carbon dioxide fixation, as well as the oxidative fragmentation of the pentose substrate. Both reactions occur simultaneously and in competition at the same active site. The polypeptide is Ribulose bisphosphate carboxylase large chain (Rhodopseudomonas palustris (strain HaA2)).